Here is a 97-residue protein sequence, read N- to C-terminus: DNA-directed RNA polymerase subunit omega (97 aa).

Residues 1-16 are compositionally biased toward polar residues; that stretch reads MSTPNALAAFNSSPSL. A disordered region spans residues 1 to 21; that stretch reads MSTPNALAAFNSSPSLNAPEG.

The protein belongs to the RNA polymerase subunit omega family. In terms of assembly, the RNAP catalytic core consists of 2 alpha, 1 beta, 1 beta' and 1 omega subunit. When a sigma factor is associated with the core the holoenzyme is formed, which can initiate transcription.

The catalysed reaction is RNA(n) + a ribonucleoside 5'-triphosphate = RNA(n+1) + diphosphate. In terms of biological role, promotes RNA polymerase assembly. Latches the N- and C-terminal regions of the beta' subunit thereby facilitating its interaction with the beta and alpha subunits. The protein is DNA-directed RNA polymerase subunit omega of Saccharopolyspora erythraea (strain ATCC 11635 / DSM 40517 / JCM 4748 / NBRC 13426 / NCIMB 8594 / NRRL 2338).